Reading from the N-terminus, the 108-residue chain is Large ribosomal subunit protein uL24 (108 aa).

This sequence belongs to the universal ribosomal protein uL24 family. As to quaternary structure, part of the 50S ribosomal subunit.

In terms of biological role, one of two assembly initiator proteins, it binds directly to the 5'-end of the 23S rRNA, where it nucleates assembly of the 50S subunit. Functionally, one of the proteins that surrounds the polypeptide exit tunnel on the outside of the subunit. This Moorella thermoacetica (strain ATCC 39073 / JCM 9320) protein is Large ribosomal subunit protein uL24.